We begin with the raw amino-acid sequence, 423 residues long: Glycine amidinotransferase, mitochondrial (423 aa).

The transit peptide at Met1–Thr43 directs the protein to the mitochondrion. Phosphoserine is present on residues Ser46 and Ser49. Asp170 is a binding site for arginine. Catalysis depends on residues Asp254 and His303. Arginine contacts are provided by Asp305, Arg322, Ser354, and Ser355. Lys385 is modified (N6-acetyllysine). Residue Cys407 is the Amidino-cysteine intermediate of the active site.

The protein belongs to the amidinotransferase family. As to quaternary structure, homodimer.

The protein localises to the mitochondrion inner membrane. It catalyses the reaction L-arginine + glycine = guanidinoacetate + L-ornithine. It carries out the reaction 4-aminobutanoate + L-arginine = 4-guanidinobutanoate + L-ornithine. The catalysed reaction is beta-alanine + L-arginine = 3-guanidinopropanoate + L-ornithine. The enzyme catalyses taurine + L-arginine = taurocyamine + L-ornithine. Its pathway is amine and polyamine biosynthesis; creatine biosynthesis; creatine from L-arginine and glycine: step 1/2. Functionally, transamidinase that catalyzes the transfer of the amidino group of L-arginine onto the amino moiety of acceptor metabolites such as glycine, beta-alanine, gamma-aminobutyric acid (GABA) and taurine yielding the corresponding guanidine derivatives. Catalyzes the rate-limiting step of creatine biosynthesis, namely the transfer of the amidino group from L-arginine to glycine to generate guanidinoacetate, which is then methylated by GAMT to form creatine. Provides creatine as a source for ATP generation in tissues with high energy demands, in particular skeletal muscle, heart and brain. This is Glycine amidinotransferase, mitochondrial (GATM) from Bos taurus (Bovine).